We begin with the raw amino-acid sequence, 431 residues long: Protein EARLY STARVATION 1, chloroplastic (431 aa).

A chloroplast-targeting transit peptide spans 1–19 (MAACSRGLVARPFDLTARG). 2 disordered regions span residues 65 to 126 (GNKP…DTGI) and 403 to 431 (GVYP…SPLE). Residues 415–431 (PAPPSDDPPGMPPSPLE) are compositionally biased toward pro residues.

This sequence belongs to the ESV1 family.

The protein resides in the plastid. It localises to the chloroplast stroma. Binds preferentially to highly ordered alpha-glucans, such as starch and crystalline maltodextrins. Involved in the organization of the starch granule matrix, thus influencing starch turnover by modulating the accessibility of starch polymers to modifying and degrading enzymes. Required for the control of starch degradation in leaves and starch distribution in nonphotosynthetic parts. Promotes gravitropic responses, negative in shoots but positive in roots, by facilitating starch granules (statoliths) formation in hypocotyls and roots columella. Facilitates tight packing of starch granules in grains. The chain is Protein EARLY STARVATION 1, chloroplastic from Oryza sativa subsp. indica (Rice).